Reading from the N-terminus, the 286-residue chain is Haloalkane dehalogenase 2 (286 aa).

An AB hydrolase-1 domain is found at 35-134 (PPILLCHGNP…RVRGVVLGNT (100 aa)). Asp109 serves as the catalytic Nucleophile. The active-site Proton donor is the Asp238. His267 serves as the catalytic Proton acceptor.

It belongs to the haloalkane dehalogenase family. Type 1 subfamily. In terms of assembly, monomer.

The catalysed reaction is 1-haloalkane + H2O = a halide anion + a primary alcohol + H(+). In terms of biological role, catalyzes hydrolytic cleavage of carbon-halogen bonds in halogenated aliphatic compounds, leading to the formation of the corresponding primary alcohols, halide ions and protons. This Mycobacterium bovis (strain ATCC BAA-935 / AF2122/97) protein is Haloalkane dehalogenase 2 (dhmA2).